The following is a 263-amino-acid chain: Small ribosomal subunit protein eS4, Y isoform 2 (263 aa).

The 63-residue stretch at 42–104 (LPLIVFLRNR…TGEHFRLVYN (63 aa)) folds into the S4 RNA-binding domain.

The protein belongs to the eukaryotic ribosomal protein eS4 family.

The sequence is that of Small ribosomal subunit protein eS4, Y isoform 2 (RPS4Y2) from Homo sapiens (Human).